The following is a 245-amino-acid chain: UPF0319 protein VV0984 (245 aa).

An N-terminal signal peptide occupies residues 1 to 20 (MRYIGKWMMLGALVSSSVFA).

The protein belongs to the UPF0319 family.

The chain is UPF0319 protein VV0984 from Vibrio vulnificus (strain YJ016).